The primary structure comprises 488 residues: Aspartyl/glutamyl-tRNA(Asn/Gln) amidotransferase subunit B (488 aa).

This sequence belongs to the GatB/GatE family. GatB subfamily. As to quaternary structure, heterotrimer of A, B and C subunits.

The catalysed reaction is L-glutamyl-tRNA(Gln) + L-glutamine + ATP + H2O = L-glutaminyl-tRNA(Gln) + L-glutamate + ADP + phosphate + H(+). The enzyme catalyses L-aspartyl-tRNA(Asn) + L-glutamine + ATP + H2O = L-asparaginyl-tRNA(Asn) + L-glutamate + ADP + phosphate + 2 H(+). Allows the formation of correctly charged Asn-tRNA(Asn) or Gln-tRNA(Gln) through the transamidation of misacylated Asp-tRNA(Asn) or Glu-tRNA(Gln) in organisms which lack either or both of asparaginyl-tRNA or glutaminyl-tRNA synthetases. The reaction takes place in the presence of glutamine and ATP through an activated phospho-Asp-tRNA(Asn) or phospho-Glu-tRNA(Gln). The sequence is that of Aspartyl/glutamyl-tRNA(Asn/Gln) amidotransferase subunit B from Neorickettsia sennetsu (strain ATCC VR-367 / Miyayama) (Ehrlichia sennetsu).